A 513-amino-acid chain; its full sequence is Pleiotropic regulator 1 (513 aa).

Met-1 carries the N-acetylmethionine modification. The tract at residues 60 to 79 (TSKENLKEKGPQNATDSYPH) is disordered. Ser-119 carries the phosphoserine modification. The tract at residues 136 to 160 (VDANRTGPAGSEYRHPGASDRSQPT) is disordered. Ser-200 carries the post-translational modification Phosphoserine. WD repeat units follow at residues 201-240 (GHLGWVRCIAVEPGNQWFVTGSADRTIKIWDLASGKLKLS), 243-282 (GHISTVRGVIVSTRSPYLFSCGEDKQVKCWDLEYNKVIRH), 285-324 (GHLSAVYGLDLHPTLDVLVTCSRDSTARIWDVRTKASVHT), 327-366 (GHTNAVATVRCQAAEPQIITGSHDTTIRLWDLVAGKTRVT), 369-409 (NHKK…QNLS), 410-448 (GHNAIINTLAVNADGVLVSGADNGTMHLWDWRTGYNFQR), and 459-498 (DSESGIFACAFDRSESRLLTAEADKTIKVYREDETATEET). Ser-390 is subject to Phosphoserine.

The protein belongs to the WD repeat PRL1/PRL2 family. Identified in the spliceosome C complex. Component of the PRP19-CDC5L splicing complex composed of a core complex comprising a homotetramer of PRPF19, CDC5L, PLRG1 and BCAS2, and at least three less stably associated proteins CTNNBL1, CWC15 and HSPA8. Interacts (via its WD40 repeat domain) directly with CDC5L (via its C-terminal); the interaction is required for mRNA splicing but not for spliceosome assembly. Component of the minor spliceosome, which splices U12-type introns. Within this complex, interacts with CRIPT. Also interacts directly in the complex with BCAS2 and PRPF19. Interacts with USB1.

It is found in the nucleus. Its subcellular location is the nucleus speckle. In terms of biological role, involved in pre-mRNA splicing as component of the spliceosome. Component of the PRP19-CDC5L complex that forms an integral part of the spliceosome and is required for activating pre-mRNA splicing. As a component of the minor spliceosome, involved in the splicing of U12-type introns in pre-mRNAs. This Mus musculus (Mouse) protein is Pleiotropic regulator 1 (Plrg1).